Consider the following 456-residue polypeptide: TGACG-sequence-specific DNA-binding protein TGA-2.1 (456 aa).

Disordered stretches follow at residues 1–41 (MASK…NTSR) and 115–170 (SASG…QKTL). Polar residues-rich tracts occupy residues 9 to 41 (GNRS…NTSR) and 125 to 141 (GESN…TSTD). The span at 158–169 (DKSKEKVLDQKT) shows a compositional bias: basic and acidic residues. Residues 166-229 (DQKTLRRLAQ…NIADQSNGVG (64 aa)) form the bZIP domain. Residues 167 to 220 (QKTLRRLAQNREAARKSRLRKKAYVQQLENSRLKLSQLEQDLQRARQQGKYISN) adopt a coiled-coil conformation. The segment at 168 to 188 (KTLRRLAQNREAARKSRLRKK) is basic motif. Positions 194 to 208 (LENSRLKLSQLEQDL) are leucine-zipper. Residues 233-450 (PLAFDAEYSR…RALSSLWLAR (218 aa)) enclose the DOG1 domain.

The protein belongs to the bZIP family. In terms of assembly, can form heterodimer with TGA2.2.

Its subcellular location is the nucleus. Its function is as follows. Transcriptional activator that binds specifically to the DNA sequence 5'-TGACG-3'. Recognizes ocs elements like the as-1 motif of the cauliflower mosaic virus 35S promoter. Binding to the as-1-like cis elements mediate auxin- and salicylic acid-inducible transcription. The chain is TGACG-sequence-specific DNA-binding protein TGA-2.1 (TGA21) from Nicotiana tabacum (Common tobacco).